A 528-amino-acid polypeptide reads, in one-letter code: PC4 and SFRS1-interacting protein (528 aa).

The region spanning 7-64 (PGDLIFAKMKGYPHWPARVDEVPDGAVKPPTNKLPIFFFGTHETAFLGPKDIFPYSEN) is the PWWP domain. Residues 61–348 (YSENKEKYGK…EKKRETSMDS (288 aa)) form a disordered region. K75 is covalently cross-linked (Glycyl lysine isopeptide (Lys-Gly) (interchain with G-Cter in SUMO2)). The segment covering 92–106 (FSSQQASTKQSNASS) has biased composition (polar residues). S102, S105, and S106 each carry phosphoserine. Over residues 113 to 135 (KETNVSKEDTDQEEKASNEDVTK) the composition is skewed to basic and acidic residues. T115 and T122 each carry phosphothreonine. S129 carries the post-translational modification Phosphoserine. T141 bears the Phosphothreonine mark. A compositionally biased stretch (basic residues) spans 144 to 153 (AARRGRKRKA). The Nuclear localization signal signature appears at 146 to 156 (RRGRKRKAEKQ). S176 and S205 each carry phosphoserine. Basic and acidic residues predominate over residues 212-260 (DEDKSKKKGPEEKQPKKQLKKEEEGQKEEEKPRKEPDKKEGKKEVESKR). S270 carries the phosphoserine modification. A Phosphothreonine modification is found at T271. Phosphoserine occurs at positions 272 and 274. Positions 285 to 300 (KRKGGRNFQAAHRRNM) are enriched in basic residues. Over residues 303-348 (GQHEKEAGDRKRKQEEQMETEQQNKDEGKKPEVKKVEKKRETSMDS) the composition is skewed to basic and acidic residues. 2 coiled-coil regions span residues 306–332 (EKEAGDRKRKQEEQMETEQQNKDEGKK) and 369–393 (NRCIEALDELASLQVTMQQAQKHTE). Residues 338–415 (VEKKRETSMD…VSQVIMEKST (78 aa)) are integrase-binding domain (IBD). Position 432 is a phosphoserine (S432). T435 carries the phosphothreonine modification. S441 bears the Phosphoserine mark. The span at 444 to 471 (EQRQHEEANKTKDQGKKGPNKKLEKEPT) shows a compositional bias: basic and acidic residues. The tract at residues 444-528 (EQRQHEEANK…ISLKESTLDN (85 aa)) is disordered. Polar residues predominate over residues 472–492 (GTKSLNGGSDAQESNHPQHNG). Over residues 496-528 (EDGKDSREASSKTKPPGEEREAEISLKESTLDN) the composition is skewed to basic and acidic residues. Position 515 is a citrulline (R515). S520 is subject to Phosphoserine. T525 is subject to Phosphothreonine.

It belongs to the HDGF family. Monomer. Interacts with IFRD1/PC4. Interacts (via IBD domain) with POGZ (via IBM motif) and CDCA7L (via IBM motifs). Interacts (via IBD domain) with KMT2A (via IBM motifs) with a moderate affinity whereas interacts with the KMT2A-MEN1 complex with a greater affinity; MEN1 enhances interaction of KMT2A with PSIP1. Interacts (via IBD domain) with IWS1 (via IBM motif), MED1 (via IBM motif) and DBF4 (via IBM motifs). Citrullinated by PADI4.

Its subcellular location is the nucleus. Functionally, transcriptional coactivator involved in neuroepithelial stem cell differentiation and neurogenesis. Involved in particular in lens epithelial cell gene regulation and stress responses. May play an important role in lens epithelial to fiber cell terminal differentiation. May play a protective role during stress-induced apoptosis. The polypeptide is PC4 and SFRS1-interacting protein (Psip1) (Mus musculus (Mouse)).